The sequence spans 226 residues: Endonuclease V (226 aa).

Residues aspartate 43 and aspartate 109 each contribute to the Mg(2+) site.

Belongs to the endonuclease V family. Mg(2+) serves as cofactor.

Its subcellular location is the cytoplasm. The enzyme catalyses Endonucleolytic cleavage at apurinic or apyrimidinic sites to products with a 5'-phosphate.. DNA repair enzyme involved in the repair of deaminated bases. Selectively cleaves double-stranded DNA at the second phosphodiester bond 3' to a deoxyinosine leaving behind the intact lesion on the nicked DNA. The protein is Endonuclease V of Kosmotoga olearia (strain ATCC BAA-1733 / DSM 21960 / TBF 19.5.1).